The chain runs to 878 residues: Alanine--tRNA ligase (878 aa).

Zn(2+) contacts are provided by His567, His571, Cys669, and His673.

This sequence belongs to the class-II aminoacyl-tRNA synthetase family. The cofactor is Zn(2+).

The protein localises to the cytoplasm. The enzyme catalyses tRNA(Ala) + L-alanine + ATP = L-alanyl-tRNA(Ala) + AMP + diphosphate. In terms of biological role, catalyzes the attachment of alanine to tRNA(Ala) in a two-step reaction: alanine is first activated by ATP to form Ala-AMP and then transferred to the acceptor end of tRNA(Ala). Also edits incorrectly charged Ser-tRNA(Ala) and Gly-tRNA(Ala) via its editing domain. The sequence is that of Alanine--tRNA ligase from Rickettsia akari (strain Hartford).